Consider the following 860-residue polypeptide: Rod cGMP-specific 3',5'-cyclic phosphodiesterase subunit alpha (860 aa).

N-acetylglycine is present on Gly2. 2 GAF domains span residues 73–222 and 254–431; these read QTEK…NLIM and DIER…GWSV. Residues 483–816 enclose the PDEase domain; it reads EEEELAEILQ…KEWKALADEY (334 aa). The active-site Proton donor is the His559. Positions 563, 599, 600, and 720 each coordinate a divalent metal cation. Positions 821 to 860 are disordered; it reads KVQEEKKQKQQSAKSAAAGNQPGGNPSPGGATTSKSCCIQ. Low complexity predominate over residues 830-851; it reads QQSAKSAAAGNQPGGNPSPGGA. The residue at position 857 (Cys857) is a Cysteine methyl ester. Residue Cys857 is the site of S-farnesyl cysteine attachment. Positions 858–860 are cleaved as a propeptide — removed in mature form; that stretch reads CIQ.

Belongs to the cyclic nucleotide phosphodiesterase family. Oligomer composed of two catalytic chains (alpha and beta), an inhibitory chain (gamma) and the delta chain. The cofactor is a divalent metal cation.

It localises to the cell membrane. Its subcellular location is the cell projection. It is found in the cilium. The protein localises to the photoreceptor outer segment. The catalysed reaction is 3',5'-cyclic GMP + H2O = GMP + H(+). Its function is as follows. Rod-specific cGMP phosphodiesterase that catalyzes the hydrolysis of 3',5'-cyclic GMP. This protein participates in processes of transmission and amplification of the visual signal. In Homo sapiens (Human), this protein is Rod cGMP-specific 3',5'-cyclic phosphodiesterase subunit alpha.